Here is a 349-residue protein sequence, read N- to C-terminus: PhoH-like protein (349 aa).

147 to 154 (GPAGTGKT) provides a ligand contact to ATP.

This sequence belongs to the PhoH family.

The protein localises to the cytoplasm. This is PhoH-like protein from Mycobacterium leprae (strain TN).